The primary structure comprises 689 residues: Glycine--tRNA ligase beta subunit (689 aa).

Belongs to the class-II aminoacyl-tRNA synthetase family. Tetramer of two alpha and two beta subunits.

It localises to the cytoplasm. The catalysed reaction is tRNA(Gly) + glycine + ATP = glycyl-tRNA(Gly) + AMP + diphosphate. This is Glycine--tRNA ligase beta subunit from Coxiella burnetii (strain RSA 331 / Henzerling II).